The following is a 123-amino-acid chain: Large ribosomal subunit protein uL29 (123 aa).

The protein belongs to the universal ribosomal protein uL29 family. In terms of assembly, component of the large ribosomal subunit.

It localises to the cytoplasm. Component of the large ribosomal subunit. The ribosome is a large ribonucleoprotein complex responsible for the synthesis of proteins in the cell. This is Large ribosomal subunit protein uL29 (rpl35) from Hippocampus comes (Tiger tail seahorse).